The primary structure comprises 272 residues: Putative phosphoenolpyruvate synthase regulatory protein (272 aa).

Residue 152–159 (GVSRSGKT) coordinates ADP.

It belongs to the pyruvate, phosphate/water dikinase regulatory protein family. PSRP subfamily.

It carries out the reaction [pyruvate, water dikinase] + ADP = [pyruvate, water dikinase]-phosphate + AMP + H(+). It catalyses the reaction [pyruvate, water dikinase]-phosphate + phosphate + H(+) = [pyruvate, water dikinase] + diphosphate. Its function is as follows. Bifunctional serine/threonine kinase and phosphorylase involved in the regulation of the phosphoenolpyruvate synthase (PEPS) by catalyzing its phosphorylation/dephosphorylation. The protein is Putative phosphoenolpyruvate synthase regulatory protein of Methylibium petroleiphilum (strain ATCC BAA-1232 / LMG 22953 / PM1).